We begin with the raw amino-acid sequence, 231 residues long: 2,3,4,5-tetrahydropyridine-2,6-dicarboxylate N-acetyltransferase (231 aa).

It belongs to the transferase hexapeptide repeat family. DapH subfamily.

It catalyses the reaction (S)-2,3,4,5-tetrahydrodipicolinate + acetyl-CoA + H2O = L-2-acetamido-6-oxoheptanedioate + CoA. The protein operates within amino-acid biosynthesis; L-lysine biosynthesis via DAP pathway; LL-2,6-diaminopimelate from (S)-tetrahydrodipicolinate (acetylase route): step 1/3. Functionally, catalyzes the transfer of an acetyl group from acetyl-CoA to tetrahydrodipicolinate. The protein is 2,3,4,5-tetrahydropyridine-2,6-dicarboxylate N-acetyltransferase of Thermosipho melanesiensis (strain DSM 12029 / CIP 104789 / BI429).